The sequence spans 240 residues: Chloroplastic group IIB intron splicing facilitator CRS2-B, chloroplastic (240 aa).

The protein belongs to the PTH family. CRS2 subfamily. Part of large ribonucleo-protein complexes that include group IIB introns and either CAF1 or CAF2.

Its subcellular location is the plastid. It localises to the chloroplast stroma. Required for the splicing of group IIB introns in chloroplasts. The protein is Chloroplastic group IIB intron splicing facilitator CRS2-B, chloroplastic (CRS2B) of Arabidopsis thaliana (Mouse-ear cress).